We begin with the raw amino-acid sequence, 69 residues long: Conotoxin Eb6.20 (69 aa).

The N-terminal stretch at 1 to 17 (VLIIAVLFLTACQLTTA) is a signal peptide. Residues 18 to 41 (ETYSRGRQKHRARRSTDKNSKWTR) constitute a propeptide that is removed on maturation. Cystine bridges form between Cys-43-Cys-57, Cys-50-Cys-61, and Cys-56-Cys-68.

This sequence belongs to the conotoxin O1 superfamily. In terms of tissue distribution, expressed by the venom duct.

The protein localises to the secreted. This chain is Conotoxin Eb6.20 (E1), found in Conus ebraeus (Hebrew cone).